Here is a 932-residue protein sequence, read N- to C-terminus: DNA mismatch repair protein MutS (932 aa).

Glycine 615–serine 622 provides a ligand contact to ATP.

This sequence belongs to the DNA mismatch repair MutS family.

Its function is as follows. This protein is involved in the repair of mismatches in DNA. It is possible that it carries out the mismatch recognition step. This protein has a weak ATPase activity. The sequence is that of DNA mismatch repair protein MutS from Clostridium botulinum (strain Langeland / NCTC 10281 / Type F).